Reading from the N-terminus, the 368-residue chain is Agmatine deiminase (368 aa).

Residue C357 is the Amidino-cysteine intermediate of the active site.

Belongs to the agmatine deiminase family. As to quaternary structure, homodimer.

It carries out the reaction agmatine + H2O = N-carbamoylputrescine + NH4(+). It participates in amine and polyamine biosynthesis; putrescine biosynthesis via agmatine pathway; N-carbamoylputrescine from agmatine: step 1/1. Functionally, mediates the hydrolysis of agmatine into N-carbamoylputrescine in the arginine decarboxylase (ADC) pathway of putrescine biosynthesis, a basic polyamine. This is Agmatine deiminase from Pseudomonas fluorescens (strain SBW25).